The chain runs to 831 residues: Periplasmic nitrate reductase (831 aa).

The tat-type signal signal peptide spans 1–29; that stretch reads MKVSRRDFIKQTAIAATASVAGIPLGTEA. One can recognise a 4Fe-4S Mo/W bis-MGD-type domain in the interval 41–97; it reads LKWSKAPCRFCGTGCGVTVAVRDNKVVATQGDPQCEVNKGLNCVKGYFLSKIMYGQD. [4Fe-4S] cluster contacts are provided by Cys48, Cys51, Cys55, and Cys83. Mo-bis(molybdopterin guanine dinucleotide) is bound by residues Lys85, Gln152, Asn177, Cys181, 214 to 221, 245 to 249, 264 to 266, Met375, Gln379, Asn485, 511 to 512, Lys534, Asp561, and 721 to 730; these read WGSNMAEM, STFTH, QTD, SD, and TGRVLEHWHS. Trp797 provides a ligand contact to substrate. Mo-bis(molybdopterin guanine dinucleotide)-binding residues include Asn805 and Lys822.

Belongs to the prokaryotic molybdopterin-containing oxidoreductase family. NasA/NapA/NarB subfamily. Component of the periplasmic nitrate reductase NapAB complex composed of NapA and NapB. The cofactor is [4Fe-4S] cluster. It depends on Mo-bis(molybdopterin guanine dinucleotide) as a cofactor. In terms of processing, predicted to be exported by the Tat system. The position of the signal peptide cleavage has not been experimentally proven.

The protein localises to the periplasm. The enzyme catalyses 2 Fe(II)-[cytochrome] + nitrate + 2 H(+) = 2 Fe(III)-[cytochrome] + nitrite + H2O. Its function is as follows. Catalytic subunit of the periplasmic nitrate reductase complex NapAB. Receives electrons from NapB and catalyzes the reduction of nitrate to nitrite. The protein is Periplasmic nitrate reductase of Cupriavidus pinatubonensis (strain JMP 134 / LMG 1197) (Cupriavidus necator (strain JMP 134)).